The chain runs to 31 residues: ALWKDVLKKIGTVALHAGKAALGAVADTISE.

Glu-31 bears the Glutamic acid 1-amide mark.

In terms of tissue distribution, expressed by the skin glands.

The protein localises to the secreted. Its function is as follows. Has antimicrobial activity. The sequence is that of Dermaseptin-7.2TR from Phyllomedusa trinitatis (Trinidad leaf frog).